The sequence spans 230 residues: Cytochrome b6-f complex iron-sulfur subunit, chloroplastic (230 aa).

Residues 1-16 show a composition bias toward low complexity; it reads MASTTLSATPTPSQLS. The interval 1–20 is disordered; it reads MASTTLSATPTPSQLSAAKN. Residues 1 to 56 constitute a chloroplast transit peptide; sequence MASTTLSATPTPSQLSAAKNGAYSPSRALLGKTARGLYPEKEMVSRKVTCQATSIP. The helical transmembrane segment at 73 to 93 threads the bilayer; that stretch reads LLGALSLPTAGMLIPYGAFFV. A Rieske domain is found at 116–212; the sequence is AAAWLKTHGP…CDISEEGKVV (97 aa). The [2Fe-2S] cluster site is built by Cys158, His160, Cys176, and His179. Cys163 and Cys178 form a disulfide bridge.

The protein belongs to the Rieske iron-sulfur protein family. The 4 large subunits of the cytochrome b6-f complex are cytochrome b6, subunit IV (17 kDa polypeptide, petD), cytochrome f and the Rieske protein, while the 4 small subunits are petG, petL, petM and petN. The complex functions as a dimer. [2Fe-2S] cluster is required as a cofactor.

Its subcellular location is the plastid. The protein localises to the chloroplast thylakoid membrane. It carries out the reaction 2 oxidized [plastocyanin] + a plastoquinol + 2 H(+)(in) = 2 reduced [plastocyanin] + a plastoquinone + 4 H(+)(out). In terms of biological role, component of the cytochrome b6-f complex, which mediates electron transfer between photosystem II (PSII) and photosystem I (PSI), cyclic electron flow around PSI, and state transitions. The polypeptide is Cytochrome b6-f complex iron-sulfur subunit, chloroplastic (petC) (Fritillaria agrestis (Stinkbells)).